Reading from the N-terminus, the 100-residue chain is Aspartyl/glutamyl-tRNA(Asn/Gln) amidotransferase subunit C (100 aa).

The protein belongs to the GatC family. In terms of assembly, heterotrimer of A, B and C subunits.

The enzyme catalyses L-glutamyl-tRNA(Gln) + L-glutamine + ATP + H2O = L-glutaminyl-tRNA(Gln) + L-glutamate + ADP + phosphate + H(+). The catalysed reaction is L-aspartyl-tRNA(Asn) + L-glutamine + ATP + H2O = L-asparaginyl-tRNA(Asn) + L-glutamate + ADP + phosphate + 2 H(+). Functionally, allows the formation of correctly charged Asn-tRNA(Asn) or Gln-tRNA(Gln) through the transamidation of misacylated Asp-tRNA(Asn) or Glu-tRNA(Gln) in organisms which lack either or both of asparaginyl-tRNA or glutaminyl-tRNA synthetases. The reaction takes place in the presence of glutamine and ATP through an activated phospho-Asp-tRNA(Asn) or phospho-Glu-tRNA(Gln). This Streptococcus pneumoniae (strain JJA) protein is Aspartyl/glutamyl-tRNA(Asn/Gln) amidotransferase subunit C.